The sequence spans 2243 residues: Zinc finger FYVE domain-containing protein 26 homolog (2243 aa).

Disordered stretches follow at residues 386-416 (SQRK…RPTA) and 514-556 (KKKA…GKAS). Positions 393–408 (GENDEEDDEQYVDDDV) are enriched in acidic residues. Residue Tyr-403 is modified to Phosphotyrosine. The span at 517 to 528 (ASSDDESRERSN) shows a compositional bias: basic and acidic residues. The segment covering 534 to 543 (NRRKARRQRR) has biased composition (basic residues). The stretch at 617–644 (KKIIETFHLEHSQLNRELHFMEQQQLVK) is one LRR 1 repeat. Phosphoserine is present on Ser-1424. Residues 1444–1500 (DEEASHCMCCRRAAFTMLMRRHHCRRCGRVVCYACSTHRIRIPELYDELEVRICNDC) form an FYVE-type zinc finger. 8 residues coordinate Zn(2+): Cys-1450, Cys-1453, Cys-1467, Cys-1470, Cys-1475, Cys-1478, Cys-1497, and Cys-1500. The segment at 1505–1534 (TPAKDQGDGTSSERSAISGQVSKSSGRSDS) is disordered. Over residues 1512–1534 (DGTSSERSAISGQVSKSSGRSDS) the composition is skewed to polar residues. The stretch at 1887–1912 (YPQLANGGLNVLMDELQQLDDAQFTA) is one LRR 2 repeat.

This sequence belongs to the ZFYVE26 family.

In terms of biological role, phosphatidylinositol 3-phosphate (PtdIns[3]P)-binding protein. Involved in autophagy. The polypeptide is Zinc finger FYVE domain-containing protein 26 homolog (Drosophila melanogaster (Fruit fly)).